We begin with the raw amino-acid sequence, 84 residues long: Insulin-like peptide 05 (84 aa).

Residues 1-22 (MKTPILFVVVVAVLIVTDSAEG) form the signal peptide. Residues 23 to 37 (FKGKANSFLKPLQRR) constitute a propeptide that is removed on maturation. 3 disulfide bridges follow: C43–C48, C44–C73, and C57–C61.

It belongs to the insulin family.

Its subcellular location is the secreted. Its function is as follows. Insulin decreases blood glucose concentration. May have evolved to activate insulin receptors (INSR) in vertebrates. Molecular docking studies reveals unique interaction with the human insulin receptor. In vivo, insulin-like peptide injection reduces blood glucose levels in two models of zebrafish diabetes (streptozotocin- and glucose-induced). Also shorter swimming distance of zebrafish larvae, an effect which is not observed with human insulin. The polypeptide is Insulin-like peptide 05 (Exaiptasia diaphana (Tropical sea anemone)).